Reading from the N-terminus, the 219-residue chain is Lipoprotein-releasing system ATP-binding protein LolD (219 aa).

The region spanning isoleucine 3 to glutamate 219 is the ABC transporter domain. Glycine 35–threonine 42 serves as a coordination point for ATP.

It belongs to the ABC transporter superfamily. Lipoprotein translocase (TC 3.A.1.125) family. The complex is composed of two ATP-binding proteins (LolD) and two transmembrane proteins (LolC and LolE).

Its subcellular location is the cell inner membrane. Functionally, part of the ABC transporter complex LolCDE involved in the translocation of mature outer membrane-directed lipoproteins, from the inner membrane to the periplasmic chaperone, LolA. Responsible for the formation of the LolA-lipoprotein complex in an ATP-dependent manner. The chain is Lipoprotein-releasing system ATP-binding protein LolD from Porphyromonas gingivalis (strain ATCC BAA-308 / W83).